The primary structure comprises 265 residues: Mlc titration factor A (265 aa).

4 residues coordinate Zn(2+): histidine 111, histidine 148, histidine 152, and glutamate 211.

The protein belongs to the MtfA family. Interacts with Mlc. Zn(2+) serves as cofactor.

It is found in the cytoplasm. Functionally, involved in the modulation of the activity of the glucose-phosphotransferase system (glucose-PTS). Interacts with the transcriptional repressor Mlc, preventing its interaction with DNA and leading to the modulation of expression of genes regulated by Mlc, including ptsG, which encodes the PTS system glucose-specific EIICB component. Its function is as follows. Shows zinc-dependent metallopeptidase activity. This Escherichia coli O6:K15:H31 (strain 536 / UPEC) protein is Mlc titration factor A.